A 215-amino-acid polypeptide reads, in one-letter code: GTP-binding nuclear protein Ran (215 aa).

One can recognise a Small GTPase Ran-type domain in the interval 6 to 170 (DIPTFKLVLV…LWLVRKLLGD (165 aa)). Residues 17–24 (DGGTGKTT), 35–41 (EKKYVAT), Gly67, 121–124 (NFVD), and 149–151 (SAK) contribute to the GTP site. Positions 36–44 (KKYVATLGV) are switch-I. The tract at residues 67–83 (GQEKFGGLRDGYYIQGQ) is switch-II. The tract at residues 210-215 (DDDEDL) is interaction with RANBP1.

The protein belongs to the small GTPase superfamily. Ran family. In terms of assembly, monomer. Interacts with RANGAP1, which promotes RAN-mediated GTP hydrolysis. Interacts with KPNB1. Interaction with KPNB1 inhibits RANGAP1-mediated stimulation of GTPase activity. Interacts with RCC1 which promotes the exchange of RAN-bound GDP by GTP. Interaction with KPNB1 inhibits RCC1-mediated exchange of RAN-bound GDP by GTP. Interacts (GTP-bound form) with TNPO1; the interaction is direct. Interacts with KPNB1 and with TNPO1; both inhibit RAN GTPase activity. Interacts (via C-terminus) with RANBP1, which alleviates the inhibition of RAN GTPase activity. Interacts with RANGRF, which promotes the release of bound guanine nucleotide. RANGRF and RCC1 compete for an overlapping binding site on RAN. Identified in a complex with KPNA2 and CSE1L; interaction with RANBP1 mediates dissociation of RAN from this complex. Interaction with both RANBP1 and KPNA2 promotes dissociation of the complex between RAN and KPNB1. Identified in a complex composed of RAN, RANGAP1 and RANBP1. Identified in a complex that contains TNPO1, RAN and RANBP1. Identified in a nuclear export complex with XPO1. Interaction with RANBP1 or RANBP2 induces a conformation change in the complex formed by XPO1 and RAN that triggers the release of the nuclear export signal of cargo proteins. Component of a nuclear export receptor complex composed of KPNB1, RAN, SNUPN and XPO1. Mg(2+) serves as cofactor.

The protein resides in the nucleus. It is found in the nucleus envelope. The protein localises to the cytoplasm. It localises to the cytosol. In terms of biological role, GTPase involved in nucleocytoplasmic transport, participating both to the import and the export from the nucleus of proteins and RNAs. Switches between a cytoplasmic GDP- and a nuclear GTP-bound state by nucleotide exchange and GTP hydrolysis. Nuclear import receptors such as importin beta bind their substrates only in the absence of GTP-bound RAN and release them upon direct interaction with GTP-bound RAN, while export receptors behave in the opposite way. Thereby, RAN controls cargo loading and release by transport receptors in the proper compartment and ensures the directionality of the transport. Interaction with RANBP1 induces a conformation change in the complex formed by XPO1 and RAN that triggers the release of the nuclear export signal of cargo proteins. RAN (GTP-bound form) triggers microtubule assembly at mitotic chromosomes and is required for normal mitotic spindle assembly and chromosome segregation. Required for normal progress through mitosis. The polypeptide is GTP-binding nuclear protein Ran (ran-1) (Onchocerca volvulus).